The chain runs to 257 residues: Taurine import ATP-binding protein TauB (257 aa).

The 228-residue stretch at 6 to 233 folds into the ABC transporter domain; it reads LDKISIHYDG…RYAAGEPIRA (228 aa). 38-45 provides a ligand contact to ATP; that stretch reads GRSGCGKT.

This sequence belongs to the ABC transporter superfamily. Taurine importer (TC 3.A.1.17.1) family. The complex is composed of two ATP-binding proteins (TauB), two transmembrane proteins (TauC) and a solute-binding protein (TauA).

The protein localises to the cell inner membrane. The catalysed reaction is taurine(out) + ATP + H2O = taurine(in) + ADP + phosphate + H(+). Functionally, part of the ABC transporter complex TauABC involved in taurine import. Responsible for energy coupling to the transport system. In Mesorhizobium japonicum (strain LMG 29417 / CECT 9101 / MAFF 303099) (Mesorhizobium loti (strain MAFF 303099)), this protein is Taurine import ATP-binding protein TauB.